Reading from the N-terminus, the 450-residue chain is Phosphoglucosamine mutase (450 aa).

The active-site Phosphoserine intermediate is Ser-102. The Mg(2+) site is built by Ser-102, Asp-243, Asp-245, and Asp-247. Ser-102 is modified (phosphoserine).

This sequence belongs to the phosphohexose mutase family. It depends on Mg(2+) as a cofactor. Post-translationally, activated by phosphorylation.

The catalysed reaction is alpha-D-glucosamine 1-phosphate = D-glucosamine 6-phosphate. Its function is as follows. Catalyzes the conversion of glucosamine-6-phosphate to glucosamine-1-phosphate. The chain is Phosphoglucosamine mutase from Rhizobium etli (strain ATCC 51251 / DSM 11541 / JCM 21823 / NBRC 15573 / CFN 42).